Here is a 102-residue protein sequence, read N- to C-terminus: Small ribosomal subunit protein uS10 (102 aa).

It belongs to the universal ribosomal protein uS10 family. Part of the 30S ribosomal subunit.

Involved in the binding of tRNA to the ribosomes. This Methanosphaera stadtmanae (strain ATCC 43021 / DSM 3091 / JCM 11832 / MCB-3) protein is Small ribosomal subunit protein uS10.